The primary structure comprises 232 residues: Ribonuclease 3 (232 aa).

Residues 6–133 (LKEIEENLGV…IIAAVYLDKG (128 aa)) form the RNase III domain. E46 is a Mg(2+) binding site. Residue D50 is part of the active site. 2 residues coordinate Mg(2+): D119 and E122. The active site involves E122. Residues 160–229 (DFKTKLQELL…AKQALDILEG (70 aa)) form the DRBM domain.

It belongs to the ribonuclease III family. In terms of assembly, homodimer. The cofactor is Mg(2+).

The protein localises to the cytoplasm. The catalysed reaction is Endonucleolytic cleavage to 5'-phosphomonoester.. Digests double-stranded RNA. Involved in the processing of primary rRNA transcript to yield the immediate precursors to the large and small rRNAs (23S and 16S). Processes some mRNAs, and tRNAs when they are encoded in the rRNA operon. Processes pre-crRNA and tracrRNA of type II CRISPR loci if present in the organism. This chain is Ribonuclease 3, found in Clostridium beijerinckii (strain ATCC 51743 / NCIMB 8052) (Clostridium acetobutylicum).